The sequence spans 295 residues: Ribosomal protein L11 methyltransferase (295 aa).

4 residues coordinate S-adenosyl-L-methionine: threonine 150, glycine 171, aspartate 193, and asparagine 232.

It belongs to the methyltransferase superfamily. PrmA family.

Its subcellular location is the cytoplasm. It carries out the reaction L-lysyl-[protein] + 3 S-adenosyl-L-methionine = N(6),N(6),N(6)-trimethyl-L-lysyl-[protein] + 3 S-adenosyl-L-homocysteine + 3 H(+). Functionally, methylates ribosomal protein L11. The polypeptide is Ribosomal protein L11 methyltransferase (Neisseria meningitidis serogroup A / serotype 4A (strain DSM 15465 / Z2491)).